Reading from the N-terminus, the 249-residue chain is T-cell immunoreceptor with Ig and ITIM domains (249 aa).

Positions 1–28 (MHGWLLLVWVQGLIQAAFLATAIGATAG) are cleaved as a signal peptide. The Ig-like V-type domain occupies 29 to 127 (TIDTKRNISA…GGIYKGRIFL (99 aa)). Residues 29–148 (TIDTKRNISA…LAQFQTAPLG (120 aa)) are Extracellular-facing. Residues 35–45 (NISAEEGGSVI) are homodimerization. An intrachain disulfide couples cysteine 48 to cysteine 111. A glycan (N-linked (GlcNAc...) asparagine) is linked at asparagine 104. The helical transmembrane segment at 149-169 (GTMAAVLGLICLMVTGVTVLA) threads the bilayer. The Cytoplasmic portion of the chain corresponds to 170 to 249 (RKDKSIRMHS…ESFIAVSKTG (80 aa)). Positions 182 to 222 (SGLGRTEAEPQEWNLRSLSSPGSPVQTQTAPAGPCGEQAED) are disordered. A compositionally biased stretch (polar residues) spans 195-211 (NLRSLSSPGSPVQTQTA). Positions 234–239 (LSYRSL) match the ITIM motif motif.

As to quaternary structure, homodimer in cis; binds with high affinity to PVR, forming a heterotetrameric assembly of two TIGIT and two PVR molecules. Binds with lower affinity to NECTIN2 and NECTIN3. Interacts with GRB2. Interacts with NECTIN4.

The protein resides in the cell membrane. In terms of biological role, inhibitory receptor that plays a role in the modulation of immune responses. Suppresses T-cell activation by promoting the generation of mature immunoregulatory dendritic cells. Upon binding to its ligands PVR/CD155 or NECTIN2/CD112, which are expressed on antigen-presenting cells, sends inhibitory signals to the T-cell or NK cell. Mechanistically, interaction with ligand leads to phosphorylation of the cytoplasmic tail by Src family tyrosine kinases such as FYN or LCK, allowing subsequent binding to adapter GRB2 and SHIP1/INPP5D. In turn, inhibits PI3K and MAPK signaling cascades. In addition, associates with beta-arrestin-2/ARRB2 to recruit SHIP1/INPP5D that suppresses autoubiquitination of TRAF6 and subsequently inhibits NF-kappa-B signaling pathway. Also acts as a receptor for NECTIN4 to inhibit NK cell cytotoxicity. This chain is T-cell immunoreceptor with Ig and ITIM domains, found in Mus musculus (Mouse).